The following is a 98-amino-acid chain: NADH-ubiquinone oxidoreductase chain 4L (98 aa).

A run of 3 helical transmembrane segments spans residues 2–22 (PSIS…MLMF), 29–49 (SLLC…LTIL), and 61–81 (ILLL…LVMV).

Belongs to the complex I subunit 4L family. In terms of assembly, core subunit of respiratory chain NADH dehydrogenase (Complex I) which is composed of 45 different subunits.

Its subcellular location is the mitochondrion inner membrane. The enzyme catalyses a ubiquinone + NADH + 5 H(+)(in) = a ubiquinol + NAD(+) + 4 H(+)(out). Functionally, core subunit of the mitochondrial membrane respiratory chain NADH dehydrogenase (Complex I) which catalyzes electron transfer from NADH through the respiratory chain, using ubiquinone as an electron acceptor. Part of the enzyme membrane arm which is embedded in the lipid bilayer and involved in proton translocation. This is NADH-ubiquinone oxidoreductase chain 4L (MT-ND4L) from Microcebus simmonsi (Simmons's mouse lemur).